Here is a 96-residue protein sequence, read N- to C-terminus: Co-chaperonin GroES (96 aa).

It belongs to the GroES chaperonin family. As to quaternary structure, heptamer of 7 subunits arranged in a ring. Interacts with the chaperonin GroEL.

The protein resides in the cytoplasm. In terms of biological role, together with the chaperonin GroEL, plays an essential role in assisting protein folding. The GroEL-GroES system forms a nano-cage that allows encapsulation of the non-native substrate proteins and provides a physical environment optimized to promote and accelerate protein folding. GroES binds to the apical surface of the GroEL ring, thereby capping the opening of the GroEL channel. In Methylibium petroleiphilum (strain ATCC BAA-1232 / LMG 22953 / PM1), this protein is Co-chaperonin GroES.